Reading from the N-terminus, the 245-residue chain is E3 ubiquitin-protein ligase RNF138 (245 aa).

The RING-type zinc finger occupies 18–58 (CPVCQEVLKTPVRTAACQHVFCRKCFLTAMRESGIHCPLCR). Residues cysteine 86, cysteine 89, histidine 101, and cysteine 105 each contribute to the Zn(2+) site. The segment at 86-105 (CRCCSKKIKFYRMRHHYKSC) adopts a C2HC RNF-type zinc-finger fold. Residues 128-154 (VRSSNRSETSASDNTETYQEDTSSSGH) are disordered. Phosphothreonine is present on threonine 142. 2 C2H2-type zinc fingers span residues 157-180 (FKCP…NSNH) and 187-215 (VTCP…NQRH). The UIM domain occupies 225–243 (LQLDEETQYQTAVEESFQV).

In terms of assembly, interacts with NLK. Interacts with XRCC5/Ku80. Interacts with RBBP8/CtIP. In terms of processing, auto-ubiquitinated.

The protein resides in the chromosome. It carries out the reaction S-ubiquitinyl-[E2 ubiquitin-conjugating enzyme]-L-cysteine + [acceptor protein]-L-lysine = [E2 ubiquitin-conjugating enzyme]-L-cysteine + N(6)-ubiquitinyl-[acceptor protein]-L-lysine.. It participates in protein modification; protein ubiquitination. E3 ubiquitin-protein ligase involved in DNA damage response by promoting DNA resection and homologous recombination. Recruited to sites of double-strand breaks following DNA damage and specifically promotes double-strand break repair via homologous recombination. Two different, non-exclusive, mechanisms have been proposed. According to a report, regulates the choice of double-strand break repair by favoring homologous recombination over non-homologous end joining (NHEJ): acts by mediating ubiquitination of XRCC5/Ku80, leading to remove the Ku complex from DNA breaks, thereby promoting homologous recombination. According to another report, cooperates with UBE2Ds E2 ubiquitin ligases (UBE2D1, UBE2D2, UBE2D3 or UBE2D4) to promote homologous recombination by mediating ubiquitination of RBBP8/CtIP. Together with NLK, involved in the ubiquitination and degradation of TCF/LEF. Also exhibits auto-ubiquitination activity in combination with UBE2K. May act as a negative regulator in the Wnt/beta-catenin-mediated signaling pathway. In Mus musculus (Mouse), this protein is E3 ubiquitin-protein ligase RNF138.